We begin with the raw amino-acid sequence, 237 residues long: Demethylmenaquinone methyltransferase (237 aa).

S-adenosyl-L-methionine contacts are provided by residues threonine 58, aspartate 79, and asparagine 106–alanine 107.

The protein belongs to the class I-like SAM-binding methyltransferase superfamily. MenG/UbiE family.

The enzyme catalyses a 2-demethylmenaquinol + S-adenosyl-L-methionine = a menaquinol + S-adenosyl-L-homocysteine + H(+). The protein operates within quinol/quinone metabolism; menaquinone biosynthesis; menaquinol from 1,4-dihydroxy-2-naphthoate: step 2/2. In terms of biological role, methyltransferase required for the conversion of demethylmenaquinol (DMKH2) to menaquinol (MKH2). This chain is Demethylmenaquinone methyltransferase, found in Bacillus mycoides (strain KBAB4) (Bacillus weihenstephanensis).